We begin with the raw amino-acid sequence, 155 residues long: Ribosomal RNA large subunit methyltransferase H (155 aa).

Residues Leu72, Gly103, and Leu122 to Leu127 contribute to the S-adenosyl-L-methionine site.

The protein belongs to the RNA methyltransferase RlmH family. In terms of assembly, homodimer.

It is found in the cytoplasm. It catalyses the reaction pseudouridine(1915) in 23S rRNA + S-adenosyl-L-methionine = N(3)-methylpseudouridine(1915) in 23S rRNA + S-adenosyl-L-homocysteine + H(+). Its function is as follows. Specifically methylates the pseudouridine at position 1915 (m3Psi1915) in 23S rRNA. The polypeptide is Ribosomal RNA large subunit methyltransferase H (Salmonella choleraesuis (strain SC-B67)).